The chain runs to 170 residues: RNA pyrophosphohydrolase (170 aa).

One can recognise a Nudix hydrolase domain in the interval 9-162 (PYRPCAGIMV…KRAVYEKVVA (154 aa)). A Nudix box motif is present at residues 50–71 (GGIDDGERPLTAAIRELYEETG).

It belongs to the Nudix hydrolase family. RppH subfamily. The cofactor is a divalent metal cation.

Its function is as follows. Accelerates the degradation of transcripts by removing pyrophosphate from the 5'-end of triphosphorylated RNA, leading to a more labile monophosphorylated state that can stimulate subsequent ribonuclease cleavage. This Agrobacterium fabrum (strain C58 / ATCC 33970) (Agrobacterium tumefaciens (strain C58)) protein is RNA pyrophosphohydrolase.